A 657-amino-acid chain; its full sequence is Probable potassium transport system protein Kup 1 (657 aa).

12 consecutive transmembrane segments (helical) span residues Val-40–Gly-60, Val-88–Leu-108, Trp-135–Thr-155, Pro-172–Val-192, Ala-198–Met-218, Phe-241–Thr-261, Trp-282–Leu-302, Leu-320–Ile-340, Leu-380–Ser-400, Tyr-402–Trp-422, Ala-432–Leu-452, and Leu-454–Thr-474.

The protein belongs to the HAK/KUP transporter (TC 2.A.72) family.

It is found in the cell inner membrane. It catalyses the reaction K(+)(in) + H(+)(in) = K(+)(out) + H(+)(out). In terms of biological role, transport of potassium into the cell. Likely operates as a K(+):H(+) symporter. The chain is Probable potassium transport system protein Kup 1 from Bradyrhizobium diazoefficiens (strain JCM 10833 / BCRC 13528 / IAM 13628 / NBRC 14792 / USDA 110).